Consider the following 638-residue polypeptide: Acetolactate synthase 2, chloroplastic (638 aa).

A chloroplast-targeting transit peptide spans 1-39 (MATAATAAAALTGATTATPKSRRRAHHLATRRALAAPIR). The interval 44–67 (SRATPTAPPATPLRPWGPNEPRKG) is disordered. E112 is a binding site for thiamine diphosphate. C132 and C278 are disulfide-bonded. FAD-binding positions include R214, 320–341 (HGTV…FGVR), and 363–382 (DIDP…ICAD). The tract at residues 455 to 535 (QHQMWAAQYY…VKVFVLNNQH (81 aa)) is thiamine pyrophosphate binding. 2 residues coordinate Mg(2+): D506 and N533.

It belongs to the TPP enzyme family. Mg(2+) serves as cofactor. Requires thiamine diphosphate as cofactor.

Its subcellular location is the plastid. It is found in the chloroplast. It catalyses the reaction 2 pyruvate + H(+) = (2S)-2-acetolactate + CO2. Its pathway is amino-acid biosynthesis; L-isoleucine biosynthesis; L-isoleucine from 2-oxobutanoate: step 1/4. It functions in the pathway amino-acid biosynthesis; L-valine biosynthesis; L-valine from pyruvate: step 1/4. This is Acetolactate synthase 2, chloroplastic (ALS2) from Zea mays (Maize).